The following is a 221-amino-acid chain: Octanoyltransferase (221 aa).

The BPL/LPL catalytic domain maps to 38 to 220; the sequence is GEIPDTLLLL…GFREVLGDPG (183 aa). Substrate-binding positions include 84–91, 149–151, and 163–165; these read RGGDATFH, AIG, and GFA. Residue Cys181 is the Acyl-thioester intermediate of the active site.

This sequence belongs to the LipB family.

Its subcellular location is the cytoplasm. It carries out the reaction octanoyl-[ACP] + L-lysyl-[protein] = N(6)-octanoyl-L-lysyl-[protein] + holo-[ACP] + H(+). Its pathway is protein modification; protein lipoylation via endogenous pathway; protein N(6)-(lipoyl)lysine from octanoyl-[acyl-carrier-protein]: step 1/2. Its function is as follows. Catalyzes the transfer of endogenously produced octanoic acid from octanoyl-acyl-carrier-protein onto the lipoyl domains of lipoate-dependent enzymes. Lipoyl-ACP can also act as a substrate although octanoyl-ACP is likely to be the physiological substrate. This chain is Octanoyltransferase, found in Rubrobacter xylanophilus (strain DSM 9941 / JCM 11954 / NBRC 16129 / PRD-1).